The sequence spans 323 residues: Probable proline iminopeptidase (323 aa).

The region spanning valine 37–alanine 301 is the AB hydrolase-1 domain. Serine 114 acts as the Nucleophile in catalysis. The active site involves aspartate 271. The active-site Proton donor is histidine 299.

This sequence belongs to the peptidase S33 family.

The protein localises to the cytoplasm. The catalysed reaction is Release of N-terminal proline from a peptide.. Specifically catalyzes the removal of N-terminal proline residues from peptides. This Streptomyces coelicolor (strain ATCC BAA-471 / A3(2) / M145) protein is Probable proline iminopeptidase.